The primary structure comprises 348 residues: Chlorophyll(ide) b reductase NOL, chloroplastic (348 aa).

The transit peptide at 1 to 61 (MATWSGFNVS…TRQNLTVTPS (61 aa)) directs the protein to the chloroplast. 84-108 (ITGSTKGIGYALAREFLKAGDNVVI) is an NAD(+) binding site. The active-site Proton acceptor is the Tyr233.

Belongs to the short-chain dehydrogenases/reductases (SDR) family. In terms of assembly, interacts with NCY1 to form a complex that acts as a chlorophyll b reductase. Interacts with HCAR, RCCR and the LHCII complex. Part of a SGR1-CCE-LHCII complex, which acts in chlorophyll breakdown.

Its subcellular location is the plastid. The protein resides in the chloroplast thylakoid membrane. The enzyme catalyses 7(1)-hydroxychlorophyllide a + NAD(+) = chlorophyllide b + NADH + H(+). It catalyses the reaction 7(1)-hydroxychlorophyllide a + NADP(+) = chlorophyllide b + NADPH + H(+). Required for chlorophyll b degradation. Chlorophyll b, chlorophyllide b, pheophorbide b and pheophytin b can be used as substrates. Belongs to the chlorophyll catabolic enzymes (CCEs). The chain is Chlorophyll(ide) b reductase NOL, chloroplastic (NOL) from Arabidopsis thaliana (Mouse-ear cress).